The following is a 303-amino-acid chain: Signal recognition particle receptor FtsY (303 aa).

Residues 108 to 115, 190 to 194, and 254 to 257 each bind GTP; these read GVNGVGKT, DTAGR, and TKLD.

This sequence belongs to the GTP-binding SRP family. FtsY subfamily. In terms of assembly, part of the signal recognition particle protein translocation system, which is composed of SRP and FtsY. SRP is a ribonucleoprotein composed of Ffh and a 4.5S RNA molecule.

It is found in the cell inner membrane. The protein localises to the cytoplasm. The catalysed reaction is GTP + H2O = GDP + phosphate + H(+). Its function is as follows. Involved in targeting and insertion of nascent membrane proteins into the cytoplasmic membrane. Acts as a receptor for the complex formed by the signal recognition particle (SRP) and the ribosome-nascent chain (RNC). Interaction with SRP-RNC leads to the transfer of the RNC complex to the Sec translocase for insertion into the membrane, the hydrolysis of GTP by both Ffh and FtsY, and the dissociation of the SRP-FtsY complex into the individual components. The chain is Signal recognition particle receptor FtsY from Rickettsia typhi (strain ATCC VR-144 / Wilmington).